Reading from the N-terminus, the 132-residue chain is MRRARTAFTYEQLVALENKFKTSRYLSVVERLNLAIQLQLSETQVKIWFQNRRTKWKKHNPGQDANTPQTPPSSDETQIQPILPANPITSFSSLLLPPIISPANSAVLQGTSIPLTLFNLNQILMPQNVGFN.

The segment at residues methionine 1–asparagine 60 is a DNA-binding region (homeobox). The interval tryptophan 56 to glutamine 80 is disordered. A compositionally biased stretch (polar residues) spans glutamine 63–glutamine 80.

It localises to the nucleus. This chain is Homeobox protein ceh-1 (ceh-1), found in Caenorhabditis elegans.